Reading from the N-terminus, the 20-residue chain is Peptidase T (20 aa).

This sequence belongs to the peptidase M20B family. Zn(2+) is required as a cofactor. Requires Co(2+) as cofactor.

Its subcellular location is the cell envelope. The catalysed reaction is Release of the N-terminal residue from a tripeptide.. Inhibited by the chelating agents EDTA and 1,10-phenanthroline, by bestatin and amastatin, p-hydroxymercuribenzoate and some divalent cations at high concentration. Its function is as follows. Cleaves a wide range of dipeptides and tripeptides, but does not display activity against larger peptides. May have a role in the survival of F.nucleatum in the subgingival environment of the mouth. This is Peptidase T (pepT) from Fusobacterium nucleatum subsp. polymorphum (Fusobacterium polymorphum).